The chain runs to 194 residues: Prostaglandin-H2 D-isomerase (194 aa).

The first 24 residues, 1-24 (MAASHTLWMGLVLLGVLGVLQTRA), serve as a signal peptide directing secretion. Gln-25 carries the post-translational modification Pyrrolidone carboxylic acid. Asn-51 carries N-linked (GlcNAc...) asparagine glycosylation. Cys-65 (nucleophile) is an active-site residue. Asn-78 carries an N-linked (GlcNAc...) asparagine glycan. Residues Cys-89 and Cys-189 are joined by a disulfide bond.

Belongs to the calycin superfamily. Lipocalin family. As to quaternary structure, monomer. In the male reproductive system, it is expressed in the testis and epididymis, and is secreted into the seminal fluid.

Its subcellular location is the rough endoplasmic reticulum. It is found in the nucleus membrane. It localises to the golgi apparatus. The protein resides in the cytoplasm. The protein localises to the perinuclear region. Its subcellular location is the secreted. It carries out the reaction prostaglandin H2 = prostaglandin D2. Catalyzes the conversion of PGH2 to PGD2, a prostaglandin involved in smooth muscle contraction/relaxation and a potent inhibitor of platelet aggregation. Involved in a variety of CNS functions, such as sedation, NREM sleep and PGE2-induced allodynia, and may have an anti-apoptotic role in oligodendrocytes. Binds small non-substrate lipophilic molecules, including biliverdin, bilirubin, retinal, retinoic acid and thyroid hormone, and may act as a scavenger for harmful hydrophobic molecules and as a secretory retinoid and thyroid hormone transporter. Possibly involved in development and maintenance of the blood-brain, blood-retina, blood-aqueous humor and blood-testis barrier. It is likely to play important roles in both maturation and maintenance of the central nervous system and male reproductive system. Involved in PLA2G3-dependent maturation of mast cells. PLA2G3 is secreted by immature mast cells and acts on nearby fibroblasts upstream to PTDGS to synthesize PGD2, which in turn promotes mast cell maturation and degranulation via PTGDR. In Equus caballus (Horse), this protein is Prostaglandin-H2 D-isomerase (PTGDS).